The chain runs to 190 residues: Signal peptidase I W (190 aa).

The helical transmembrane segment at 4 to 24 (ISNILYVIIFTLIIVLTLVVI) threads the bilayer. Ser-45 is a catalytic residue. A helical membrane pass occupies residues 143-163 (PIGTAVLLIVPGVMLLVYAFV).

It belongs to the peptidase S26B family.

The protein resides in the cell membrane. The catalysed reaction is Cleavage of hydrophobic, N-terminal signal or leader sequences from secreted and periplasmic proteins.. Its function is as follows. Required for the cleavage of the signal sequence of TasA and TapA, which are involved in biofilm formation. In Bacillus subtilis (strain 168), this protein is Signal peptidase I W.